We begin with the raw amino-acid sequence, 273 residues long: 3-methyl-2-oxobutanoate hydroxymethyltransferase (273 aa).

2 residues coordinate Mg(2+): aspartate 53 and aspartate 92. 3-methyl-2-oxobutanoate is bound by residues 53–54, aspartate 92, and lysine 122; that span reads DS. Glutamate 124 provides a ligand contact to Mg(2+). The active-site Proton acceptor is glutamate 191.

It belongs to the PanB family. In terms of assembly, homodecamer; pentamer of dimers. It depends on Mg(2+) as a cofactor.

It is found in the cytoplasm. The catalysed reaction is 3-methyl-2-oxobutanoate + (6R)-5,10-methylene-5,6,7,8-tetrahydrofolate + H2O = 2-dehydropantoate + (6S)-5,6,7,8-tetrahydrofolate. The protein operates within cofactor biosynthesis; (R)-pantothenate biosynthesis; (R)-pantoate from 3-methyl-2-oxobutanoate: step 1/2. In terms of biological role, catalyzes the reversible reaction in which hydroxymethyl group from 5,10-methylenetetrahydrofolate is transferred onto alpha-ketoisovalerate to form ketopantoate. The chain is 3-methyl-2-oxobutanoate hydroxymethyltransferase from Bacteroides fragilis (strain ATCC 25285 / DSM 2151 / CCUG 4856 / JCM 11019 / LMG 10263 / NCTC 9343 / Onslow / VPI 2553 / EN-2).